We begin with the raw amino-acid sequence, 437 residues long: Tol-Pal system protein TolB (437 aa).

The first 23 residues, 1-23 (MQKRHPIIYLLITLLIFVPVSYG), serve as a signal peptide directing secretion.

This sequence belongs to the TolB family. As to quaternary structure, the Tol-Pal system is composed of five core proteins: the inner membrane proteins TolA, TolQ and TolR, the periplasmic protein TolB and the outer membrane protein Pal. They form a network linking the inner and outer membranes and the peptidoglycan layer.

It localises to the periplasm. Its function is as follows. Part of the Tol-Pal system, which plays a role in outer membrane invagination during cell division and is important for maintaining outer membrane integrity. This Coxiella burnetii (strain RSA 493 / Nine Mile phase I) protein is Tol-Pal system protein TolB.